The chain runs to 970 residues: Protein CLASP-3 (970 aa).

Disordered regions lie at residues 314–377 (SRLA…QKAR) and 651–675 (NGIS…ETPH). Residues 344–355 (GSRTRTSSITSN) show a composition bias toward polar residues. The stretch at 905-943 (ITPCVIKAYQSTSSSVRKTVVYCLVAMVNRVGEQRMAPH) is one HEAT repeat.

The protein belongs to the CLASP family.

The protein localises to the cytoplasm. The protein resides in the cytoskeleton. Its function is as follows. Microtubule plus-end tracking protein that promotes the stabilization of dynamic microtubules. The sequence is that of Protein CLASP-3 (cls-3) from Caenorhabditis briggsae.